We begin with the raw amino-acid sequence, 112 residues long: Nitrogen regulatory protein P-II (112 aa).

An O-UMP-tyrosine modification is found at tyrosine 51.

Belongs to the P(II) protein family. In terms of assembly, homotrimer.

It localises to the plastid. It is found in the chloroplast. Its function is as follows. P-II indirectly controls the transcription of the glutamine synthetase gene (glnA). P-II prevents NR-II-catalyzed conversion of NR-I to NR-I-phosphate, the transcriptional activator of glnA. When P-II is uridylylated to P-II-UMP, these events are reversed. When the ratio of Gln to 2-ketoglutarate decreases, P-II is uridylylated to P-II-UMP, which causes the deadenylation of glutamine synthetase, so activating the enzyme. This is Nitrogen regulatory protein P-II (glnB) from Pyropia yezoensis (Susabi-nori).